The sequence spans 256 residues: Pimeloyl-[acyl-carrier protein] methyl ester esterase (256 aa).

The region spanning 15–242 is the AB hydrolase-1 domain; that stretch reads HLVLLHGWGL…AAHAPFISHP (228 aa). Substrate-binding positions include W22, 82–83, and 143–147; these read SL and FLALQ. Residue S82 is the Nucleophile of the active site. Residues D207 and H235 contribute to the active site. A substrate-binding site is contributed by H235.

This sequence belongs to the AB hydrolase superfamily. Carboxylesterase BioH family. In terms of assembly, monomer.

The protein localises to the cytoplasm. It catalyses the reaction 6-carboxyhexanoyl-[ACP] methyl ester + H2O = 6-carboxyhexanoyl-[ACP] + methanol + H(+). It functions in the pathway cofactor biosynthesis; biotin biosynthesis. In terms of biological role, the physiological role of BioH is to remove the methyl group introduced by BioC when the pimeloyl moiety is complete. It allows to synthesize pimeloyl-ACP via the fatty acid synthetic pathway through the hydrolysis of the ester bonds of pimeloyl-ACP esters. This chain is Pimeloyl-[acyl-carrier protein] methyl ester esterase, found in Escherichia coli O127:H6 (strain E2348/69 / EPEC).